We begin with the raw amino-acid sequence, 52 residues long: Large ribosomal subunit protein bL33 (52 aa).

The protein belongs to the bacterial ribosomal protein bL33 family.

The polypeptide is Large ribosomal subunit protein bL33 (Campylobacter jejuni subsp. jejuni serotype O:6 (strain 81116 / NCTC 11828)).